We begin with the raw amino-acid sequence, 292 residues long: Small ribosomal subunit protein uS2 (292 aa).

Residues 265–292 form a disordered region; that stretch reads TETALDWSDEPVAGDWAAEPAADAQGGW. A compositionally biased stretch (low complexity) spans 277–292; sequence AGDWAAEPAADAQGGW.

Belongs to the universal ribosomal protein uS2 family. In terms of assembly, component of the small ribosomal subunit. Mature ribosomes consist of a small (40S) and a large (60S) subunit. The 40S subunit contains about 33 different proteins and 1 molecule of RNA (18S). The 60S subunit contains about 49 different proteins and 3 molecules of RNA (25S, 5.8S and 5S). Interacts with RPS21.

Its subcellular location is the cytoplasm. Required for the assembly and/or stability of the 40S ribosomal subunit. Required for the processing of the 20S rRNA-precursor to mature 18S rRNA in a late step of the maturation of 40S ribosomal subunits. The sequence is that of Small ribosomal subunit protein uS2 from Cryptococcus neoformans var. neoformans serotype D (strain B-3501A) (Filobasidiella neoformans).